The chain runs to 126 residues: MAIAGLGTDIVEISRLGKGDTANERLAKRVLTPAEWQQFCEHARPVRFLAKRFAAKEAAVKALGTGIGNGISWQHIEVRNNNLGAPELHFSGEFAAMCEARGITRSVVSISDEQHYAVATVILETV.

2 residues coordinate Mg(2+): Asp-9 and Glu-57.

Belongs to the P-Pant transferase superfamily. AcpS family. It depends on Mg(2+) as a cofactor.

Its subcellular location is the cytoplasm. It carries out the reaction apo-[ACP] + CoA = holo-[ACP] + adenosine 3',5'-bisphosphate + H(+). In terms of biological role, transfers the 4'-phosphopantetheine moiety from coenzyme A to a Ser of acyl-carrier-protein. In Alteromonas mediterranea (strain DSM 17117 / CIP 110805 / LMG 28347 / Deep ecotype), this protein is Holo-[acyl-carrier-protein] synthase.